We begin with the raw amino-acid sequence, 325 residues long: Bifunctional nuclease 1 (325 aa).

Residues 117–252 (CVHNNPQGGH…YLAYSDGMRV (136 aa)) form the BFN domain. Positions 284-318 (TKEFNILSKMMQAVDEERYDEAAEWRDKLGQFRAK) constitute a UVR domain.

The protein belongs to the bifunctional nuclease family.

It localises to the nucleus. Bifunctional nuclease with both RNase and DNase activities. Involved in basal defense response. Participates in abscisic acid-derived callose deposition following infection by a necrotrophic pathogen. The sequence is that of Bifunctional nuclease 1 (BBD1) from Arabidopsis thaliana (Mouse-ear cress).